Reading from the N-terminus, the 173-residue chain is Putative phosphoesterase GK0864 (173 aa).

The Proton donor role is filled by His34. 2 short sequence motifs (HXTX) span residues 34–37 and 115–118; these read HITL and HITI. The active-site Proton acceptor is His115.

Belongs to the 2H phosphoesterase superfamily. YjcG family.

This is Putative phosphoesterase GK0864 from Geobacillus kaustophilus (strain HTA426).